A 452-amino-acid chain; its full sequence is Proline--tRNA ligase (452 aa).

It belongs to the class-II aminoacyl-tRNA synthetase family. ProS type 2 subfamily. Homodimer.

It localises to the cytoplasm. It catalyses the reaction tRNA(Pro) + L-proline + ATP = L-prolyl-tRNA(Pro) + AMP + diphosphate. Its function is as follows. Catalyzes the attachment of proline to tRNA(Pro) in a two-step reaction: proline is first activated by ATP to form Pro-AMP and then transferred to the acceptor end of tRNA(Pro). The protein is Proline--tRNA ligase of Jannaschia sp. (strain CCS1).